A 38-amino-acid polypeptide reads, in one-letter code: NAD-reducing hydrogenase HoxS subunit beta (38 aa).

Belongs to the [NiFe]/[NiFeSe] hydrogenase large subunit family. As to quaternary structure, tetramer of an alpha and a gamma subunits (flavin-containing dimer), and a delta and a nickel-containing beta subunits (hydrogenase dimer). Requires FMN as cofactor. Ni(2+) is required as a cofactor.

The protein resides in the cytoplasm. It carries out the reaction H2 + NAD(+) = NADH + H(+). The sequence is that of NAD-reducing hydrogenase HoxS subunit beta (hoxH) from Rhodococcus opacus (Nocardia opaca).